An 867-amino-acid polypeptide reads, in one-letter code: Translation initiation factor IF-2 (867 aa).

The tr-type G domain occupies 367-534 (TRAPVVTIMG…AILLQSEILE (168 aa)). The interval 376 to 383 (GHVDHGKT) is G1. Position 376 to 383 (376 to 383 (GHVDHGKT)) interacts with GTP. Residues 401 to 405 (GITQN) are G2. The tract at residues 422 to 425 (DTPG) is G3. Residues 422 to 426 (DTPGH) and 476 to 479 (NKID) contribute to the GTP site. A G4 region spans residues 476–479 (NKID). The tract at residues 512-514 (SAK) is G5.

It belongs to the TRAFAC class translation factor GTPase superfamily. Classic translation factor GTPase family. IF-2 subfamily.

It is found in the cytoplasm. Its function is as follows. One of the essential components for the initiation of protein synthesis. Protects formylmethionyl-tRNA from spontaneous hydrolysis and promotes its binding to the 30S ribosomal subunits. Also involved in the hydrolysis of GTP during the formation of the 70S ribosomal complex. This chain is Translation initiation factor IF-2, found in Buchnera aphidicola subsp. Schizaphis graminum (strain Sg).